The primary structure comprises 334 residues: Cytochrome c biogenesis protein CcsA (334 aa).

Transmembrane regions (helical) follow at residues 12-32 (NTAF…VVFP), 35-55 (WLVQ…TALL), 67-87 (ISNL…VHFI), 96-116 (FVGA…ALTL), 141-161 (VMMV…AFLF), 242-262 (IIGL…VWAN), 277-297 (WALI…TKGW), and 303-323 (AILA…VNLL).

This sequence belongs to the CcmF/CycK/Ccl1/NrfE/CcsA family. May interact with ccs1.

It is found in the cellular thylakoid membrane. Functionally, required during biogenesis of c-type cytochromes (cytochrome c6 and cytochrome f) at the step of heme attachment. The sequence is that of Cytochrome c biogenesis protein CcsA from Synechocystis sp. (strain ATCC 27184 / PCC 6803 / Kazusa).